Consider the following 134-residue polypeptide: DNA-directed RNA polymerase subunit omega (134 aa).

Belongs to the RNA polymerase subunit omega family. The RNAP catalytic core consists of 2 alpha, 1 beta, 1 beta' and 1 omega subunit. When a sigma factor is associated with the core the holoenzyme is formed, which can initiate transcription.

It carries out the reaction RNA(n) + a ribonucleoside 5'-triphosphate = RNA(n+1) + diphosphate. In terms of biological role, promotes RNA polymerase assembly. Latches the N- and C-terminal regions of the beta' subunit thereby facilitating its interaction with the beta and alpha subunits. The protein is DNA-directed RNA polymerase subunit omega of Rhizobium johnstonii (strain DSM 114642 / LMG 32736 / 3841) (Rhizobium leguminosarum bv. viciae).